The primary structure comprises 395 residues: Elongation factor Tu (395 aa).

Residues 10–204 enclose the tr-type G domain; it reads KPHVNIGTIG…AVDSYIPTPE (195 aa). The G1 stretch occupies residues 19 to 26; it reads GHVDHGKT. 19–26 serves as a coordination point for GTP; sequence GHVDHGKT. Thr26 is a Mg(2+) binding site. The interval 60–64 is G2; that stretch reads GITIS. The G3 stretch occupies residues 81 to 84; the sequence is DCPG. GTP contacts are provided by residues 81–85 and 136–139; these read DCPGH and NKCD. A G4 region spans residues 136–139; it reads NKCD. Positions 174-176 are G5; the sequence is SAL.

It belongs to the TRAFAC class translation factor GTPase superfamily. Classic translation factor GTPase family. EF-Tu/EF-1A subfamily. Monomer.

It localises to the cytoplasm. The enzyme catalyses GTP + H2O = GDP + phosphate + H(+). Its function is as follows. GTP hydrolase that promotes the GTP-dependent binding of aminoacyl-tRNA to the A-site of ribosomes during protein biosynthesis. This Listeria monocytogenes serotype 4b (strain CLIP80459) protein is Elongation factor Tu.